We begin with the raw amino-acid sequence, 174 residues long: Guided entry of tail-anchored proteins factor 1 (174 aa).

The Lumenal portion of the chain corresponds to 1–8 (MSSAAADH). Residues 9–29 (WAWLLVLSFVFGCNVLRVLLP) traverse the membrane as a helical segment. The Cytoplasmic portion of the chain corresponds to 30–99 (SFSSFMSRVL…VKARTAQLAK (70 aa)). Residues 39 to 94 (LQKDAEQESQMRAEIQDMKQELSTVNMMDEFARYARLERKINKMTDKLKTHVKART) adopt a coiled-coil conformation. An interaction with GET3/TRC40 region spans residues 39–97 (LQKDAEQESQMRAEIQDMKQELSTVNMMDEFARYARLERKINKMTDKLKTHVKARTAQL). The helical transmembrane segment at 100–120 (IKWVISVAFYVLQAALMISLI) threads the bilayer. The Lumenal portion of the chain corresponds to 121 to 148 (WKYYSVPVAVVPSKWITPLDRLVAFPTR). Residues 149 to 169 (VAGGVGITCWILVCNKVVAIV) form a helical membrane-spanning segment. The Cytoplasmic portion of the chain corresponds to 170 to 174 (LHPFS).

Belongs to the WRB/GET1 family. Component of the Golgi to ER traffic (GET) complex, which is composed of GET1/WRB, CAMLG/GET2 and GET3. Within the complex, GET1 and CAMLG form a heterotetramer which is stabilized by phosphatidylinositol binding and which binds to the GET3 homodimer. Interacts with CAMLG (via C-terminus). GET3 shows a higher affinity for CAMLG than for GET1.

It localises to the endoplasmic reticulum membrane. Its function is as follows. Required for the post-translational delivery of tail-anchored (TA) proteins to the endoplasmic reticulum. Together with CAMLG/GET2, acts as a membrane receptor for soluble GET3/TRC40, which recognizes and selectively binds the transmembrane domain of TA proteins in the cytosol. Required to ensure correct topology and ER insertion of CAMLG. This Pongo abelii (Sumatran orangutan) protein is Guided entry of tail-anchored proteins factor 1.